A 282-amino-acid chain; its full sequence is MTELVHTRAELAAARDGLTGTVGVVMTMGALHSGHETLLRAARERADHVLVTIFVNPLQFGPDEDFNRYPRTLDVDLEICRRAGVAVVFAPVVTELYPEGKPRVWVAPGQLGEELEGQSRPGFFHGVLTVVLKLLHVTRPDLAFFGEKDYQQLTLVRRMVGDLDVPVEIVGVPTVREPDGLALSSRNRYLSPDERAAALSLSGALRAGAAAAAVGADAGAVLAAAHAAFESGPSGARLDYLVLTDSDLEPGPTAGPARMLVAAWVGTTRLIDNMSVQLAPYS.

An ATP-binding site is contributed by Met-28–His-35. Catalysis depends on His-35, which acts as the Proton donor. Residue Gln-59 coordinates (R)-pantoate. Residue Gln-59 participates in beta-alanine binding. Gly-146–Asp-149 contacts ATP. Gln-152 provides a ligand contact to (R)-pantoate. ATP is bound by residues Val-175 and Leu-183–Arg-186.

This sequence belongs to the pantothenate synthetase family. In terms of assembly, homodimer.

It is found in the cytoplasm. The enzyme catalyses (R)-pantoate + beta-alanine + ATP = (R)-pantothenate + AMP + diphosphate + H(+). The protein operates within cofactor biosynthesis; (R)-pantothenate biosynthesis; (R)-pantothenate from (R)-pantoate and beta-alanine: step 1/1. Catalyzes the condensation of pantoate with beta-alanine in an ATP-dependent reaction via a pantoyl-adenylate intermediate. The protein is Pantothenate synthetase of Salinispora arenicola (strain CNS-205).